The chain runs to 381 residues: S-(hydroxymethyl)glutathione dehydrogenase (381 aa).

Cys-49 is a binding site for Zn(2+). His-50 serves as a coordination point for NAD(+). Zn(2+) contacts are provided by His-71, Glu-72, Cys-101, Cys-104, Cys-107, Cys-115, and Cys-178. NAD(+)-binding positions include 203–208 (GGGIVG), Asp-227, and 298–300 (IGV).

This sequence belongs to the zinc-containing alcohol dehydrogenase family. Class-III subfamily. Zn(2+) is required as a cofactor.

The enzyme catalyses a primary alcohol + NAD(+) = an aldehyde + NADH + H(+). The catalysed reaction is a secondary alcohol + NAD(+) = a ketone + NADH + H(+). It catalyses the reaction S-(hydroxymethyl)glutathione + NADP(+) = S-formylglutathione + NADPH + H(+). It carries out the reaction S-(hydroxymethyl)glutathione + NAD(+) = S-formylglutathione + NADH + H(+). The enzyme catalyses S-nitrosoglutathione + NADH + H(+) = S-(hydroxysulfenamide)glutathione + NAD(+). Its function is as follows. Oxidizes long-chain alcohols and, in the presence of glutathione, is able to oxidize formaldehyde. Also acts as a S-nitroso-glutathione reductase by catalyzing the NADH-dependent reduction of S-nitrosoglutathione, thereby regulating protein S-nitrosylation. This is S-(hydroxymethyl)glutathione dehydrogenase (FDH1) from Candida maltosa (Yeast).